Reading from the N-terminus, the 950-residue chain is Serine/threonine-protein phosphatase 4 regulatory subunit 1 (950 aa).

HEAT repeat units lie at residues 1–25 (MADLSLLQEDLQEDADGFGVDDYSS), 26–63 (ESDVIIIPSALDFVSQDEMLTPLGRLDKYAASENIFNR), 65–81 (MVARSLLDTLREVCDDE), 82–119 (RDCIAVLERISRLADDSEPTVRAELMEQVPHIALFCQE), 127–164 (AFSKFLLPIVVRYLADQNNQVRKTSQAALLALLEQELI), 168–206 (DVETKVCPVLIELTAPDSNDDVKTEAVAIMCKMAPMVGK), 208–246 (ITERLILPRFCEMCCDCRMFHVRKVCAANFGDICSVVGQ), 248–285 (ATEEMLLPRFFQLCSDNVWGVRKACAECFMAVSCATCQ), and 287–324 (IRRTKLSALFINLISDPSRWVRQAAFQSLGPFISTFAN). 3 disordered regions span residues 326 to 374 (SSSG…SVSN), 413 to 438 (ESHQEAASNENDKKPGNYKSMLRPEV), and 473 to 499 (EQNSGGKPSPEGPEEESEGPVPSSPNI). Basic and acidic residues predominate over residues 332-365 (FKEESKSSEEMSVENKNRTRDQEAPEDVQVRPED). HEAT repeat units lie at residues 505–542 (KELEEMIENLEPHIDDPDVKAQVEVLSAALRASSLDAH), 568–606 (INQEDSVPLISDAVENMDSTLHYIHSDSDLSNNSSFSPD), 698–734 (LTAADLVPIFNGFLKDLDEVRIGVLKHLHDFLKLLHI), 799–837 (WISYKLVSEMVKKLHAATPPTFGVDLINELVENFGRCPK), and 861–898 (QFAVHLMPHLLTLANDRVPNVRVLLAKTLRQTLLEKDY). Position 935 is a phosphoserine (Ser935).

Serine/threonine-protein phosphatase 4 (PP4) occurs in different assemblies of the catalytic and one or more regulatory subunits. Component of the PP4 complex PPP4C-PPP4R1. Interacts with HDAC3. In terms of assembly, (Microbial infection) Interacts with merkel polyomavirus small tumor antigen; this interaction bridges small tumor antigen with NEMO to inhibit NF-kappa-B. Widely expressed with high expression in cultured mesangial cells. Isoform 1 and isoform 2 are expressed in renal tissues.

In terms of biological role, regulatory subunit of serine/threonine-protein phosphatase 4. May play a role in regulation of cell division in renal glomeruli. The PPP4C-PPP4R1 PP4 complex may play a role in dephosphorylation and regulation of HDAC3. Plays a role in the inhibition of TNF-induced NF-kappa-B activation by regulating the dephosphorylation of TRAF2. Its function is as follows. (Microbial infection) Participates in merkel polyomavirus-mediated inhibition of NF-kappa-B by bridging viral small tumor antigen with NEMO. The polypeptide is Serine/threonine-protein phosphatase 4 regulatory subunit 1 (PPP4R1) (Homo sapiens (Human)).